Reading from the N-terminus, the 261-residue chain is Zinc import ATP-binding protein ZnuC (261 aa).

Residues 6–221 (IRLEKVAVRF…PAFVELFGNN (216 aa)) form the ABC transporter domain. 38-45 (GPNGAGKT) lines the ATP pocket.

Belongs to the ABC transporter superfamily. Zinc importer (TC 3.A.1.15.5) family. As to quaternary structure, the complex is composed of two ATP-binding proteins (ZnuC), two transmembrane proteins (ZnuB) and a solute-binding protein (ZnuA).

Its subcellular location is the cell inner membrane. It carries out the reaction Zn(2+)(out) + ATP(in) + H2O(in) = Zn(2+)(in) + ADP(in) + phosphate(in) + H(+)(in). Part of the ABC transporter complex ZnuABC involved in zinc import. Responsible for energy coupling to the transport system. This Pseudomonas fluorescens (strain Pf0-1) protein is Zinc import ATP-binding protein ZnuC.